The chain runs to 515 residues: tRNA pseudouridine synthase Pus10 (515 aa).

The Zn(2+) site is built by Cys21 and Cys24. Residues 42–85 (KEVTYELQKYLSHGDPAEENDTPPSKKAKIEEDTSSNEHLGNCE) adopt a coiled-coil conformation. The disordered stretch occupies residues 55–82 (GDPAEENDTPPSKKAKIEEDTSSNEHLG). Residues Cys96 and Cys99 each contribute to the Zn(2+) site. An RNA binding forefinger loop region spans residues 291 to 304 (TPWIIDGERKIESS). Asp331 functions as the Nucleophile in the catalytic mechanism. An RNA binding thumb loop region spans residues 428 to 443 (QKTPLRVLHRRPLASR).

The protein belongs to the pseudouridine synthase Pus10 family.

Its subcellular location is the nucleus. It is found in the cytoplasm. It localises to the mitochondrion. The enzyme catalyses uridine(55) in tRNA = pseudouridine(55) in tRNA. The catalysed reaction is uridine(54) in tRNA = pseudouridine(54) in tRNA. Functionally, protein with different functions depending on its subcellular location: involved in miRNA processing in the nucleus and acts as a tRNA pseudouridylate synthase in the cytoplasm. In the cytoplasm, acts as a pseudouridylate synthase by catalyzing synthesis of pseudouridine(54) and pseudouridine(55) from uracil-54 and uracil-55, respectively, in the psi GC loop of a subset of tRNAs. tRNA pseudouridylate synthase activity is enhanced by the presence of 1-methyladenosine at position 53-61 of tRNAs. Does not show tRNA pseudouridylate synthase activity in the nucleus. In the nucleus, promotes primary microRNAs (pri-miRNAs) processing independently of its RNA pseudouridylate synthase activity. Binds pri-miRNAs. This is tRNA pseudouridine synthase Pus10 from Xenopus laevis (African clawed frog).